A 94-amino-acid chain; its full sequence is HssA/B-like protein 51 (94 aa).

The disordered stretch occupies residues 1 to 25 (MTLFSSISSISNPMTNSKSRISSFG).

The protein belongs to the hssA/B family.

The chain is HssA/B-like protein 51 (hssl51) from Dictyostelium discoideum (Social amoeba).